A 313-amino-acid polypeptide reads, in one-letter code: Glucan 1,3-beta-glucosidase (313 aa).

The signal sequence occupies residues 1-23; it reads MRFSTTLATAATALFFTASQVSA. E124 serves as the catalytic Proton donor. N202 is a glycosylation site (N-linked (GlcNAc...) asparagine). The active-site Nucleophile is E233. N284 is a glycosylation site (N-linked (GlcNAc...) asparagine).

This sequence belongs to the glycosyl hydrolase 17 family.

It is found in the secreted. The protein resides in the cell wall. It catalyses the reaction Successive hydrolysis of beta-D-glucose units from the non-reducing ends of (1-&gt;3)-beta-D-glucans, releasing alpha-glucose.. Glucanases possibly play a role in cell expansion during growth, in cell-cell fusion during mating, and in spore release during sporulation. This enzyme may be involved in beta-glucan degradation and also function biosynthetically as a transglycosylase. In Saccharomyces cerevisiae (strain ATCC 204508 / S288c) (Baker's yeast), this protein is Glucan 1,3-beta-glucosidase (BGL2).